Here is a 275-residue protein sequence, read N- to C-terminus: 4-hydroxy-3-methylbut-2-enyl diphosphate reductase (275 aa).

C12 is a binding site for [4Fe-4S] cluster. (2E)-4-hydroxy-3-methylbut-2-enyl diphosphate contacts are provided by H36 and H70. Positions 36 and 70 each coordinate dimethylallyl diphosphate. Positions 36 and 70 each coordinate isopentenyl diphosphate. A [4Fe-4S] cluster-binding site is contributed by C92. Position 120 (H120) interacts with (2E)-4-hydroxy-3-methylbut-2-enyl diphosphate. Residue H120 coordinates dimethylallyl diphosphate. H120 provides a ligand contact to isopentenyl diphosphate. Residue E122 is the Proton donor of the active site. T157 is a binding site for (2E)-4-hydroxy-3-methylbut-2-enyl diphosphate. C185 lines the [4Fe-4S] cluster pocket. 4 residues coordinate (2E)-4-hydroxy-3-methylbut-2-enyl diphosphate: S213, S214, N215, and S257. Residues S213, S214, N215, and S257 each coordinate dimethylallyl diphosphate. Isopentenyl diphosphate is bound by residues S213, S214, N215, and S257.

Belongs to the IspH family. [4Fe-4S] cluster serves as cofactor.

It catalyses the reaction isopentenyl diphosphate + 2 oxidized [2Fe-2S]-[ferredoxin] + H2O = (2E)-4-hydroxy-3-methylbut-2-enyl diphosphate + 2 reduced [2Fe-2S]-[ferredoxin] + 2 H(+). The catalysed reaction is dimethylallyl diphosphate + 2 oxidized [2Fe-2S]-[ferredoxin] + H2O = (2E)-4-hydroxy-3-methylbut-2-enyl diphosphate + 2 reduced [2Fe-2S]-[ferredoxin] + 2 H(+). The protein operates within isoprenoid biosynthesis; dimethylallyl diphosphate biosynthesis; dimethylallyl diphosphate from (2E)-4-hydroxy-3-methylbutenyl diphosphate: step 1/1. It participates in isoprenoid biosynthesis; isopentenyl diphosphate biosynthesis via DXP pathway; isopentenyl diphosphate from 1-deoxy-D-xylulose 5-phosphate: step 6/6. Catalyzes the conversion of 1-hydroxy-2-methyl-2-(E)-butenyl 4-diphosphate (HMBPP) into a mixture of isopentenyl diphosphate (IPP) and dimethylallyl diphosphate (DMAPP). Acts in the terminal step of the DOXP/MEP pathway for isoprenoid precursor biosynthesis. The chain is 4-hydroxy-3-methylbut-2-enyl diphosphate reductase from Nitratiruptor sp. (strain SB155-2).